The primary structure comprises 181 residues: Probable RNA 2'-phosphotransferase (181 aa).

The protein belongs to the KptA/TPT1 family.

Removes the 2'-phosphate from RNA via an intermediate in which the phosphate is ADP-ribosylated by NAD followed by a presumed transesterification to release the RNA and generate ADP-ribose 1''-2''-cyclic phosphate (APPR&gt;P). May function as an ADP-ribosylase. This Nostoc punctiforme (strain ATCC 29133 / PCC 73102) protein is Probable RNA 2'-phosphotransferase.